The chain runs to 205 residues: Holliday junction branch migration complex subunit RuvA (205 aa).

Residues 1-64 are domain I; that stretch reads MIGHIQGVLT…EDAQLLYGFI (64 aa). Residues 65 to 143 form a domain II region; the sequence is SASERSLFRL…DWQPSTPFTD (79 aa). Residues 136–157 form a disordered region; that stretch reads QPSTPFTDRAPLDSQGMDAREH. The tract at residues 144–156 is flexible linker; the sequence is RAPLDSQGMDARE. Residues 157 to 205 form a domain III region; the sequence is HPADARTDAISALQSLGYKENQAEKALQKVYSAEHNSETLIRLALKQLS.

It belongs to the RuvA family. Homotetramer. Forms an RuvA(8)-RuvB(12)-Holliday junction (HJ) complex. HJ DNA is sandwiched between 2 RuvA tetramers; dsDNA enters through RuvA and exits via RuvB. An RuvB hexamer assembles on each DNA strand where it exits the tetramer. Each RuvB hexamer is contacted by two RuvA subunits (via domain III) on 2 adjacent RuvB subunits; this complex drives branch migration. In the full resolvosome a probable DNA-RuvA(4)-RuvB(12)-RuvC(2) complex forms which resolves the HJ.

It is found in the cytoplasm. The RuvA-RuvB-RuvC complex processes Holliday junction (HJ) DNA during genetic recombination and DNA repair, while the RuvA-RuvB complex plays an important role in the rescue of blocked DNA replication forks via replication fork reversal (RFR). RuvA specifically binds to HJ cruciform DNA, conferring on it an open structure. The RuvB hexamer acts as an ATP-dependent pump, pulling dsDNA into and through the RuvAB complex. HJ branch migration allows RuvC to scan DNA until it finds its consensus sequence, where it cleaves and resolves the cruciform DNA. The chain is Holliday junction branch migration complex subunit RuvA from Idiomarina loihiensis (strain ATCC BAA-735 / DSM 15497 / L2-TR).